A 128-amino-acid chain; its full sequence is Prokineticin-2 (128 aa).

An N-terminal signal peptide occupies residues 1 to 26; the sequence is MGDPRCAPLLLLLLLPLLFTPPAGDA. Cystine bridges form between cysteine 33-cysteine 45, cysteine 39-cysteine 57, cysteine 44-cysteine 106, cysteine 67-cysteine 114, and cysteine 108-cysteine 124.

The protein belongs to the AVIT (prokineticin) family. As to expression, expressed in the SCN and among a few other discrete brain areas, including the islands of Calleja, media l preoptic area of the hypothalamus and the shell of the nucleus accumbens. Highly expressed in testis. In the SCN, expression subjected to high amplitude of circadian oscillation.

It is found in the secreted. May function as an output molecule from the suprachiasmatic nucleus (SCN) that transmits behavioral circadian rhythm. May also function locally within the SCN to synchronize output. Potently contracts gastrointestinal (GI) smooth muscle. In Mus musculus (Mouse), this protein is Prokineticin-2 (Prok2).